Consider the following 470-residue polypeptide: UDP-glycosyltransferase 91A1 (470 aa).

UDP-alpha-D-glucose contacts are provided by residues serine 290, 350 to 352 (VEQ), 367 to 375 (HPGWGTIIE), and 389 to 392 (VYDQ).

It belongs to the UDP-glycosyltransferase family.

The polypeptide is UDP-glycosyltransferase 91A1 (UGT91A1) (Arabidopsis thaliana (Mouse-ear cress)).